We begin with the raw amino-acid sequence, 779 residues long: Protein WEAK CHLOROPLAST MOVEMENT UNDER BLUE LIGHT-like 1 (779 aa).

Positions 1–119 (MEDLKTTDAL…NAVSPRPLYS (119 aa)) are disordered. Residues 79–88 (DSPTTPSFVS) are compositionally biased toward polar residues. S139 is modified (phosphoserine). Coiled coils occupy residues 182–503 (RMKV…KQRE), 532–587 (KETR…ESRL), and 657–715 (AVSE…KWRE). The span at 650–661 (ANARVAAAVSEV) shows a compositional bias: low complexity. Disordered stretches follow at residues 650-674 (ANARVAAAVSEVGEAKETEKRSLEK) and 694-759 (EKAE…NPVK). 2 stretches are compositionally biased toward basic and acidic residues: residues 662-674 (GEAKETEKRSLEK) and 694-718 (EKAEKAKEGKLGVEQELRKWREVSE). The span at 741–753 (TSVSNETETNPIP) shows a compositional bias: polar residues.

The protein belongs to the WEB family.

The protein is Protein WEAK CHLOROPLAST MOVEMENT UNDER BLUE LIGHT-like 1 (WEL1) of Arabidopsis thaliana (Mouse-ear cress).